A 364-amino-acid chain; its full sequence is Glycosyltransferase 8 domain-containing protein 1 (364 aa).

Residues 1–5 (MRRVH) are Cytoplasmic-facing. Residues 6 to 26 (ITVILLAAVIFLLVLHHNILG) form a helical; Signal-anchor for type II membrane protein membrane-spanning segment. Residues 27–364 (LSDILKRQNS…QFSLIRRHAE (338 aa)) lie on the Lumenal side of the membrane. Asn102, Asn247, and Asn255 each carry an N-linked (GlcNAc...) asparagine glycan.

The protein belongs to the glycosyltransferase 8 family.

The protein resides in the membrane. This is Glycosyltransferase 8 domain-containing protein 1 (glt8d1) from Xenopus laevis (African clawed frog).